Reading from the N-terminus, the 198-residue chain is Putative peptidyl-prolyl cis-trans isomerase (198 aa).

The PPIase cyclophilin-type domain maps to 14 to 195 (NEIKVAMHTN…HDVVIESIDV (182 aa)).

This sequence belongs to the cyclophilin-type PPIase family.

The catalysed reaction is [protein]-peptidylproline (omega=180) = [protein]-peptidylproline (omega=0). PPIases accelerate the folding of proteins. It catalyzes the cis-trans isomerization of proline imidic peptide bonds in oligopeptides. The chain is Putative peptidyl-prolyl cis-trans isomerase from Staphylococcus haemolyticus (strain JCSC1435).